We begin with the raw amino-acid sequence, 552 residues long: Polypyrimidine tract-binding protein 3 (552 aa).

Methionine 1 bears the N-acetylmethionine mark. Phosphoserine is present on serine 17. Positions 32–43 (MNSSTPSTANGN) are enriched in polar residues. A disordered region spans residues 32 to 55 (MNSSTPSTANGNDSKKFKRDRPPC). 3 RRM domains span residues 59-143 (RVLH…NLPN), 182-258 (LRII…FSKL), and 358-432 (SVLL…LSKH). Residue lysine 65 forms a Glycyl lysine isopeptide (Lys-Gly) (interchain with G-Cter in SUMO2) linkage. Tyrosine 127 carries the post-translational modification Phosphotyrosine. Threonine 138 bears the Phosphothreonine mark. Residue lysine 216 forms a Glycyl lysine isopeptide (Lys-Gly) (interchain with G-Cter in SUMO2) linkage. The residue at position 423 (lysine 423) is an N6-acetyllysine. The disordered stretch occupies residues 435–455 (VQLPREGQEDQGLTKDFSNSP). Serine 454 carries the post-translational modification Phosphoserine. In terms of domain architecture, RRM 4 spans 475–550 (ATLHLSNIPP…HHLRVSFSKS (76 aa)).

In terms of assembly, interacts with THBS4 (via the acidic amphipathic C-terminus). As to expression, expressed in several hematopoietic cell lines examined.

In terms of biological role, RNA-binding protein that mediates pre-mRNA alternative splicing regulation. Plays a role in the regulation of cell proliferation, differentiation and migration. Positive regulator of EPO-dependent erythropoiesis. Participates in cell differentiation regulation by repressing tissue-specific exons. Promotes FAS exon 6 skipping. Binds RNA, preferentially to both poly(G) and poly(U). This chain is Polypyrimidine tract-binding protein 3 (PTBP3), found in Homo sapiens (Human).